Here is a 248-residue protein sequence, read N- to C-terminus: Probable transcriptional regulatory protein BBta_6910 (248 aa).

It belongs to the TACO1 family.

Its subcellular location is the cytoplasm. This is Probable transcriptional regulatory protein BBta_6910 from Bradyrhizobium sp. (strain BTAi1 / ATCC BAA-1182).